Reading from the N-terminus, the 520-residue chain is Aspartate-proton symporter (520 aa).

Transmembrane regions (helical) follow at residues 13–33 (LFDL…LFAV), 49–69 (ILGG…GAAL), 85–105 (HLVG…LISI), 130–150 (TISG…LNYW), 161–181 (IISI…IFHF), 201–221 (AAIS…IVSV), 232–252 (IPIA…VLQV), 281–301 (IAVM…AILS), 345–365 (WLSF…NALV), 366–386 (NVCS…SAAL), 402–422 (MSII…WSGW), 425–445 (VSWL…FSKY), 460–480 (AWWL…GSFG), and 482–502 (GLGI…SLAI).

This sequence belongs to the amino acid-polyamine-organocation (APC) superfamily. AGT (TC 2.A.3.11) family.

The protein localises to the cell membrane. Functionally, uptake of L-aspartate with the concomitant import of a proton. Can also transport aspartate hydroxamate and L-glutamate with lower affinity and efficiency. The polypeptide is Aspartate-proton symporter (yveA) (Bacillus subtilis (strain 168)).